The sequence spans 208 residues: Sodium/potassium-transporting ATPase subunit beta-1-interacting protein 4 (208 aa).

Helical transmembrane passes span 10-30 (LILL…FDFL), 35-55 (APIL…FGTL), 62-82 (VIAY…LICF), and 151-171 (ALQI…TSVF).

This sequence belongs to the NKAIN family. Interacts with atp1b1 C-terminus.

It localises to the cell membrane. This Xenopus tropicalis (Western clawed frog) protein is Sodium/potassium-transporting ATPase subunit beta-1-interacting protein 4 (nkain4).